We begin with the raw amino-acid sequence, 592 residues long: 2-succinyl-5-enolpyruvyl-6-hydroxy-3-cyclohexene-1-carboxylate synthase (592 aa).

The protein belongs to the TPP enzyme family. MenD subfamily. Homodimer. The cofactor is Mg(2+). It depends on Mn(2+) as a cofactor. Thiamine diphosphate serves as cofactor.

The enzyme catalyses isochorismate + 2-oxoglutarate + H(+) = 5-enolpyruvoyl-6-hydroxy-2-succinyl-cyclohex-3-ene-1-carboxylate + CO2. Its pathway is quinol/quinone metabolism; 1,4-dihydroxy-2-naphthoate biosynthesis; 1,4-dihydroxy-2-naphthoate from chorismate: step 2/7. The protein operates within quinol/quinone metabolism; menaquinone biosynthesis. Functionally, catalyzes the thiamine diphosphate-dependent decarboxylation of 2-oxoglutarate and the subsequent addition of the resulting succinic semialdehyde-thiamine pyrophosphate anion to isochorismate to yield 2-succinyl-5-enolpyruvyl-6-hydroxy-3-cyclohexene-1-carboxylate (SEPHCHC). In Leifsonia xyli subsp. xyli (strain CTCB07), this protein is 2-succinyl-5-enolpyruvyl-6-hydroxy-3-cyclohexene-1-carboxylate synthase.